Consider the following 108-residue polypeptide: Thiosulfate sulfurtransferase GlpE (108 aa).

The region spanning 17 to 105 (QEKEAVLVDI…WQRQFPAEVA (89 aa)) is the Rhodanese domain. Cys-65 functions as the Cysteine persulfide intermediate in the catalytic mechanism.

This sequence belongs to the GlpE family.

The protein localises to the cytoplasm. The catalysed reaction is thiosulfate + hydrogen cyanide = thiocyanate + sulfite + 2 H(+). The enzyme catalyses thiosulfate + [thioredoxin]-dithiol = [thioredoxin]-disulfide + hydrogen sulfide + sulfite + 2 H(+). Its function is as follows. Transferase that catalyzes the transfer of sulfur from thiosulfate to thiophilic acceptors such as cyanide or dithiols. May function in a CysM-independent thiosulfate assimilation pathway by catalyzing the conversion of thiosulfate to sulfite, which can then be used for L-cysteine biosynthesis. The chain is Thiosulfate sulfurtransferase GlpE from Escherichia coli O157:H7.